Here is a 188-residue protein sequence, read N- to C-terminus: MPVADTSQHISGVAERYASSLFELALEEGAVPAVTADLDRFQAMLDDSGDLKRFISSPVFSAEEQVGAVQALATKAGFGAYFTNFLKVVAKNRRLFALPGMVKAFRIIAAQHRGEVSAEITSAHALTKAQENELKAALKGVTGKDVAIAVTVDPSILGGLIVKVGSRQIDTSLRTKLSTLKLALKEVG.

This sequence belongs to the ATPase delta chain family. In terms of assembly, F-type ATPases have 2 components, F(1) - the catalytic core - and F(0) - the membrane proton channel. F(1) has five subunits: alpha(3), beta(3), gamma(1), delta(1), epsilon(1). F(0) has three main subunits: a(1), b(2) and c(10-14). The alpha and beta chains form an alternating ring which encloses part of the gamma chain. F(1) is attached to F(0) by a central stalk formed by the gamma and epsilon chains, while a peripheral stalk is formed by the delta and b chains.

It localises to the cell inner membrane. Functionally, f(1)F(0) ATP synthase produces ATP from ADP in the presence of a proton or sodium gradient. F-type ATPases consist of two structural domains, F(1) containing the extramembraneous catalytic core and F(0) containing the membrane proton channel, linked together by a central stalk and a peripheral stalk. During catalysis, ATP synthesis in the catalytic domain of F(1) is coupled via a rotary mechanism of the central stalk subunits to proton translocation. In terms of biological role, this protein is part of the stalk that links CF(0) to CF(1). It either transmits conformational changes from CF(0) to CF(1) or is implicated in proton conduction. The protein is ATP synthase subunit delta of Rhizobium rhizogenes (strain K84 / ATCC BAA-868) (Agrobacterium radiobacter).